The following is a 196-amino-acid chain: ATP-dependent Clp protease proteolytic subunit (196 aa).

Serine 98 serves as the catalytic Nucleophile. Histidine 123 is a catalytic residue.

This sequence belongs to the peptidase S14 family. As to quaternary structure, fourteen ClpP subunits assemble into 2 heptameric rings which stack back to back to give a disk-like structure with a central cavity, resembling the structure of eukaryotic proteasomes.

Its subcellular location is the cytoplasm. It catalyses the reaction Hydrolysis of proteins to small peptides in the presence of ATP and magnesium. alpha-casein is the usual test substrate. In the absence of ATP, only oligopeptides shorter than five residues are hydrolyzed (such as succinyl-Leu-Tyr-|-NHMec, and Leu-Tyr-Leu-|-Tyr-Trp, in which cleavage of the -Tyr-|-Leu- and -Tyr-|-Trp bonds also occurs).. In terms of biological role, cleaves peptides in various proteins in a process that requires ATP hydrolysis. Has a chymotrypsin-like activity. Plays a major role in the degradation of misfolded proteins. The polypeptide is ATP-dependent Clp protease proteolytic subunit (Sulfurimonas denitrificans (strain ATCC 33889 / DSM 1251) (Thiomicrospira denitrificans (strain ATCC 33889 / DSM 1251))).